The primary structure comprises 729 residues: DNA topoisomerase 3 (729 aa).

The region spanning K3–T136 is the Toprim domain. Mg(2+) is bound by residues E9 and D105. The 442-residue stretch at Y153–V594 folds into the Topo IA-type catalytic domain. Residues N187 to Q192 form an interaction with DNA region. Residue Y310 is the O-(5'-phospho-DNA)-tyrosine intermediate of the active site. Over residues E686 to E713 the composition is skewed to basic and acidic residues. A disordered region spans residues E686–P718.

It belongs to the type IA topoisomerase family. It depends on Mg(2+) as a cofactor.

It catalyses the reaction ATP-independent breakage of single-stranded DNA, followed by passage and rejoining.. Functionally, releases the supercoiling and torsional tension of DNA, which is introduced during the DNA replication and transcription, by transiently cleaving and rejoining one strand of the DNA duplex. Introduces a single-strand break via transesterification at a target site in duplex DNA. The scissile phosphodiester is attacked by the catalytic tyrosine of the enzyme, resulting in the formation of a DNA-(5'-phosphotyrosyl)-enzyme intermediate and the expulsion of a 3'-OH DNA strand. The free DNA strand then undergoes passage around the unbroken strand, thus removing DNA supercoils. Finally, in the religation step, the DNA 3'-OH attacks the covalent intermediate to expel the active-site tyrosine and restore the DNA phosphodiester backbone. This chain is DNA topoisomerase 3, found in Bacillus cereus (strain ZK / E33L).